Here is a 112-residue protein sequence, read N- to C-terminus: Nitrogen regulatory protein P-II (112 aa).

Position 51 is an O-UMP-tyrosine (Tyr-51).

It belongs to the P(II) protein family. As to quaternary structure, homotrimer.

In terms of biological role, in nitrogen-limiting conditions, when the ratio of Gln to 2-ketoglutarate decreases, P-II is uridylylated to P-II-UMP. P-II-UMP allows the deadenylation of glutamine synthetase (GS), thus activating the enzyme. Conversely, in nitrogen excess P-II is deuridylated and promotes the adenylation of GS. P-II indirectly controls the transcription of the GS gene (glnA). P-II prevents NR-II-catalyzed conversion of NR-I to NR-I-phosphate, the transcriptional activator of glnA. When P-II is uridylylated to P-II-UMP, these events are reversed. In Rhizobium etli (strain ATCC 51251 / DSM 11541 / JCM 21823 / NBRC 15573 / CFN 42), this protein is Nitrogen regulatory protein P-II (glnB).